The primary structure comprises 160 residues: Keratin-associated protein 9-6 (160 aa).

16 repeat units span residues 4–8, 13–17, 18–22, 37–41, 42–46, 47–51, 56–60, 61–65, 66–70, 75–79, 80–84, 90–94, 95–99, 140–144, 149–153, and 154–158. Residues 4–158 are 16 X 5 AA repeats of C-C-[GSVRQ]-[QTSPHN]-[TPSGYC]; it reads CCSPGCQPTC…CCVSSCCQHS (155 aa).

It belongs to the KRTAP type 9 family. As to quaternary structure, interacts with hair keratins.

In terms of biological role, in the hair cortex, hair keratin intermediate filaments are embedded in an interfilamentous matrix, consisting of hair keratin-associated proteins (KRTAP), which are essential for the formation of a rigid and resistant hair shaft through their extensive disulfide bond cross-linking with abundant cysteine residues of hair keratins. The matrix proteins include the high-sulfur and high-glycine-tyrosine keratins. This is Keratin-associated protein 9-6 from Homo sapiens (Human).